A 96-amino-acid chain; its full sequence is Aspartyl/glutamyl-tRNA(Asn/Gln) amidotransferase subunit C (96 aa).

It belongs to the GatC family. Heterotrimer of A, B and C subunits.

It catalyses the reaction L-glutamyl-tRNA(Gln) + L-glutamine + ATP + H2O = L-glutaminyl-tRNA(Gln) + L-glutamate + ADP + phosphate + H(+). The catalysed reaction is L-aspartyl-tRNA(Asn) + L-glutamine + ATP + H2O = L-asparaginyl-tRNA(Asn) + L-glutamate + ADP + phosphate + 2 H(+). Allows the formation of correctly charged Asn-tRNA(Asn) or Gln-tRNA(Gln) through the transamidation of misacylated Asp-tRNA(Asn) or Glu-tRNA(Gln) in organisms which lack either or both of asparaginyl-tRNA or glutaminyl-tRNA synthetases. The reaction takes place in the presence of glutamine and ATP through an activated phospho-Asp-tRNA(Asn) or phospho-Glu-tRNA(Gln). The sequence is that of Aspartyl/glutamyl-tRNA(Asn/Gln) amidotransferase subunit C from Chloroflexus aurantiacus (strain ATCC 29366 / DSM 635 / J-10-fl).